Consider the following 528-residue polypeptide: DNA damage-binding protein cmr1 (528 aa).

Disordered stretches follow at residues 32–98 (AQSS…QYEA) and 217–243 (DASQ…DPDP). Residues 52–62 (KPKKKPPPKKV) show a composition bias toward basic residues. Residues 185 to 226 (LTPERIYTMTFHPSEAKPLIFAGDKMGNLGVLDASQEKPTSA) form a WD 1 repeat. Residues 230-242 (EDDEEDAEDDDPD) show a composition bias toward acidic residues. WD repeat units lie at residues 250–290 (PHTR…SVEK), 297–337 (SDDI…RSAV), 342–382 (LSEK…HDDP), 389–428 (VSRL…AAWE), 451–494 (GRWV…LAQL), and 497–528 (DGIT…CLWM).

The protein belongs to the WD repeat DDB2/WDR76 family.

Its function is as follows. DNA-binding protein that binds to both single- and double-stranded DNA. Binds preferentially to UV-damaged DNA. May be involved in DNA-metabolic processes. The chain is DNA damage-binding protein cmr1 from Aspergillus fumigatus (strain CBS 144.89 / FGSC A1163 / CEA10) (Neosartorya fumigata).